A 305-amino-acid polypeptide reads, in one-letter code: MKEFFRLSRKGFTGREDQDSAQIPDDLWVKCSSCRELIYKKQLNDNLKVCPKCGHHMRLSAHEWLGLLDVGSFREMDANLLPTDPLGFVTDEESYAAKLAKTQQRTGMADAVIAGIGAISNMQICVAVADFSFMGASMGSVYGEKMARSAERAAELGVPLLTINTSGGARQQEGVIGLMQMAKVTMALTRLADAGQPHIALLVDPCYGGVTASYPSVADIIIAEPGANIGFAGKRLIEQIMRQKLPAGFQTAEFMLEHGMIDMVVPRSEMRDTLARILRLYRQRSTSPAKAELAGRRATLPQPIM.

The 270-residue stretch at 27–296 (LWVKCSSCRE…SPAKAELAGR (270 aa)) folds into the CoA carboxyltransferase N-terminal domain. Zn(2+) is bound by residues cysteine 31, cysteine 34, cysteine 50, and cysteine 53. Residues 31–53 (CSSCRELIYKKQLNDNLKVCPKC) form a C4-type zinc finger.

It belongs to the AccD/PCCB family. Acetyl-CoA carboxylase is a heterohexamer composed of biotin carboxyl carrier protein (AccB), biotin carboxylase (AccC) and two subunits each of ACCase subunit alpha (AccA) and ACCase subunit beta (AccD). Zn(2+) is required as a cofactor.

Its subcellular location is the cytoplasm. It carries out the reaction N(6)-carboxybiotinyl-L-lysyl-[protein] + acetyl-CoA = N(6)-biotinyl-L-lysyl-[protein] + malonyl-CoA. It participates in lipid metabolism; malonyl-CoA biosynthesis; malonyl-CoA from acetyl-CoA: step 1/1. Component of the acetyl coenzyme A carboxylase (ACC) complex. Biotin carboxylase (BC) catalyzes the carboxylation of biotin on its carrier protein (BCCP) and then the CO(2) group is transferred by the transcarboxylase to acetyl-CoA to form malonyl-CoA. The polypeptide is Acetyl-coenzyme A carboxylase carboxyl transferase subunit beta (Chloroflexus aurantiacus (strain ATCC 29366 / DSM 635 / J-10-fl)).